The chain runs to 82 residues: Small ribosomal subunit protein uS17 (82 aa).

The protein belongs to the universal ribosomal protein uS17 family. Part of the 30S ribosomal subunit.

Its function is as follows. One of the primary rRNA binding proteins, it binds specifically to the 5'-end of 16S ribosomal RNA. This Shewanella piezotolerans (strain WP3 / JCM 13877) protein is Small ribosomal subunit protein uS17.